Here is a 226-residue protein sequence, read N- to C-terminus: Urease accessory protein UreF (226 aa).

This sequence belongs to the UreF family. As to quaternary structure, ureD, UreF and UreG form a complex that acts as a GTP-hydrolysis-dependent molecular chaperone, activating the urease apoprotein by helping to assemble the nickel containing metallocenter of UreC. The UreE protein probably delivers the nickel.

It is found in the cytoplasm. Required for maturation of urease via the functional incorporation of the urease nickel metallocenter. The sequence is that of Urease accessory protein UreF from Burkholderia cenocepacia (strain ATCC BAA-245 / DSM 16553 / LMG 16656 / NCTC 13227 / J2315 / CF5610) (Burkholderia cepacia (strain J2315)).